Here is a 444-residue protein sequence, read N- to C-terminus: Adiponectin receptor protein (444 aa).

Over residues 1-13 (MDSATNLLEQQGS) the composition is skewed to polar residues. Residues 1–24 (MDSATNLLEQQGSAADVSGGSHPA) form a disordered region. Residues 1–204 (MDSATNLLEQ…KSIFRVHTET (204 aa)) lie on the Cytoplasmic side of the membrane. A helical transmembrane segment spans residues 205 to 225 (GNIWTHLLGCIAFIGVALYFI). Residues 226–237 (SRPSVEIQTQEK) are Extracellular-facing. The helical transmembrane segment at 238–258 (IVFGAFFIGAIVCLGFSFAFH) threads the bilayer. His258 is a binding site for Zn(2+). Over 259-276 (TLSCHSVEMGRLFSKLDY) the chain is Cytoplasmic. The helical transmembrane segment at 277-297 (CGIALLIMGSFVPWLYYGFYC) threads the bilayer. Over 298–302 (HYQPK) the chain is Extracellular. A helical transmembrane segment spans residues 303–323 (VIYLSVVSILGILSIVVSLWD). Topologically, residues 324–334 (KFSEPALRPLR) are cytoplasmic. The helical transmembrane segment at 335–355 (AGVFMSFGLSGVIPAIHYSIM) threads the bilayer. The Extracellular segment spans residues 356–365 (EGWFSQMSRA). The helical transmembrane segment at 366–386 (SLGWLILMGLLYILGALLYAL) threads the bilayer. Over 387–405 (RVPERWFPGKFDIWGQSHQ) the chain is Cytoplasmic. His404 and His408 together coordinate Zn(2+). A helical transmembrane segment spans residues 406–426 (IFHILVIAAAFVHYHGISEMA). The Extracellular portion of the chain corresponds to 427-444 (MYRVMYSECTVPIEPITF).

This sequence belongs to the ADIPOR family. As to expression, in larval and adult brain, expressed in insulin-producing cells and in neurons of the subesophageal region. Also expressed in lateral neurons of the adult brain (at protein level). In third instar larvae, expressed in central nervous system (CNS), imaginal disk, salivary gland, fat body, gut and malphigian tubules.

It is found in the cell membrane. Its function is as follows. Adiponectin receptor. In insulin-producing cells, regulates insulin secretion and controls glucose and lipid metabolism. This is Adiponectin receptor protein (AdipoR) from Drosophila melanogaster (Fruit fly).